Reading from the N-terminus, the 462-residue chain is UDP-N-acetylmuramate--L-alanine ligase (462 aa).

119–125 (GTHGKTT) provides a ligand contact to ATP.

Belongs to the MurCDEF family.

The protein localises to the cytoplasm. It carries out the reaction UDP-N-acetyl-alpha-D-muramate + L-alanine + ATP = UDP-N-acetyl-alpha-D-muramoyl-L-alanine + ADP + phosphate + H(+). It functions in the pathway cell wall biogenesis; peptidoglycan biosynthesis. In terms of biological role, cell wall formation. This is UDP-N-acetylmuramate--L-alanine ligase from Parabacteroides distasonis (strain ATCC 8503 / DSM 20701 / CIP 104284 / JCM 5825 / NCTC 11152).